The sequence spans 429 residues: Fumarylacetoacetase (429 aa).

A Ca(2+)-binding site is contributed by aspartate 139. Residue histidine 146 is the Proton acceptor of the active site. Arginine 155 lines the substrate pocket. 3 residues coordinate Ca(2+): glutamate 212, glutamate 214, and aspartate 246. Aspartate 246 contributes to the Mg(2+) binding site. Glutamine 253 serves as a coordination point for substrate. The Mg(2+) site is built by lysine 266 and threonine 270. Threonine 363 serves as a coordination point for substrate.

It belongs to the FAH family. Requires Ca(2+) as cofactor. It depends on Mg(2+) as a cofactor.

It carries out the reaction 4-fumarylacetoacetate + H2O = acetoacetate + fumarate + H(+). It functions in the pathway amino-acid degradation; L-phenylalanine degradation; acetoacetate and fumarate from L-phenylalanine: step 6/6. Its function is as follows. Converts fumarylacetoacetate to acetoacetate and fumarate. Involved in tyrosine catabolic pathway. Catalyzes the final step in the tyrosine degradation pathway. This is Fumarylacetoacetase from Oryza sativa subsp. japonica (Rice).